Here is a 932-residue protein sequence, read N- to C-terminus: Lon protease homolog 2, peroxisomal (932 aa).

The 249-residue stretch at 11-259 (LALVPLPKGS…RVVELLARQV (249 aa)) folds into the Lon N-terminal domain. A disordered region spans residues 304–340 (TGLTPPGAAGGRNNEDEKETNEVDELQKRLQEAELSP). Basic and acidic residues predominate over residues 328–340 (ELQKRLQEAELSP). 486-493 (GPPGTGKT) provides a ligand contact to ATP. The 188-residue stretch at 729–916 (HGRPGVVTGL…WEAIRQVWPG (188 aa)) folds into the Lon proteolytic domain. Active-site residues include Ser-822 and Lys-865. Residues 930–932 (SRL) carry the Microbody targeting signal motif.

Belongs to the peptidase S16 family.

The protein localises to the peroxisome matrix. It carries out the reaction Hydrolysis of proteins in presence of ATP.. Its function is as follows. ATP-dependent serine protease that mediates the selective degradation of misfolded and unassembled polypeptides in the peroxisomal matrix. Necessary for type 2 peroxisome targeting signal (PTS2)-containing protein processing and facilitates peroxisome matrix protein import. The polypeptide is Lon protease homolog 2, peroxisomal (Aspergillus fumigatus (strain ATCC MYA-4609 / CBS 101355 / FGSC A1100 / Af293) (Neosartorya fumigata)).